The primary structure comprises 341 residues: L-threonine 3-dehydrogenase (341 aa).

A Zn(2+)-binding site is contributed by C38. Catalysis depends on charge relay system residues T40 and H43. The Zn(2+) site is built by H63, E64, C93, C96, C99, and C107. NAD(+) contacts are provided by residues I175, D195, R200, 262–264 (LGI), and 286–287 (IY).

Belongs to the zinc-containing alcohol dehydrogenase family. Homotetramer. Requires Zn(2+) as cofactor.

The protein resides in the cytoplasm. It catalyses the reaction L-threonine + NAD(+) = (2S)-2-amino-3-oxobutanoate + NADH + H(+). It functions in the pathway amino-acid degradation; L-threonine degradation via oxydo-reductase pathway; glycine from L-threonine: step 1/2. Functionally, catalyzes the NAD(+)-dependent oxidation of L-threonine to 2-amino-3-ketobutyrate. The sequence is that of L-threonine 3-dehydrogenase from Shewanella sediminis (strain HAW-EB3).